A 271-amino-acid chain; its full sequence is MPELPEVETTRRGVAPHITGRKILQVNIYEPRLRWPVPMDLPAAAQGKTVLNVTRRAKYLLINLGDDELLFHLGMSGNLRIVAPETPRMKHDHVDILLEGDITLRYNDPRRFGCLLLLNPPTQEHPLLKHLGPEPLSDQFSGELLYKRSRQRKSPVKTFLMDQAIVVGVGNIYANEALFLAGIRPTRAAGEVSLKRYQVLAEAVRKVLSDAINMGGATLRDFVGGDGKPGYFQQTLRAYGRGGQPCTVCQTELKEIKLGQRTSVFCPSCQR.

The Schiff-base intermediate with DNA role is filled by P2. The active-site Proton donor is E3. K58 functions as the Proton donor; for beta-elimination activity in the catalytic mechanism. Positions 91, 110, and 152 each coordinate DNA. The segment at 237–271 adopts an FPG-type zinc-finger fold; that stretch reads RAYGRGGQPCTVCQTELKEIKLGQRTSVFCPSCQR. Residue R261 is the Proton donor; for delta-elimination activity of the active site.

The protein belongs to the FPG family. As to quaternary structure, monomer. The cofactor is Zn(2+).

The enzyme catalyses Hydrolysis of DNA containing ring-opened 7-methylguanine residues, releasing 2,6-diamino-4-hydroxy-5-(N-methyl)formamidopyrimidine.. It carries out the reaction 2'-deoxyribonucleotide-(2'-deoxyribose 5'-phosphate)-2'-deoxyribonucleotide-DNA = a 3'-end 2'-deoxyribonucleotide-(2,3-dehydro-2,3-deoxyribose 5'-phosphate)-DNA + a 5'-end 5'-phospho-2'-deoxyribonucleoside-DNA + H(+). Its function is as follows. Involved in base excision repair of DNA damaged by oxidation or by mutagenic agents. Acts as a DNA glycosylase that recognizes and removes damaged bases. Has a preference for oxidized purines, such as 7,8-dihydro-8-oxoguanine (8-oxoG). Has AP (apurinic/apyrimidinic) lyase activity and introduces nicks in the DNA strand. Cleaves the DNA backbone by beta-delta elimination to generate a single-strand break at the site of the removed base with both 3'- and 5'-phosphates. This Hahella chejuensis (strain KCTC 2396) protein is Formamidopyrimidine-DNA glycosylase.